The primary structure comprises 530 residues: Bifunctional purine biosynthesis protein PurH (530 aa).

Positions 1-148 (MEQARPIRRA…KNHKDVAIVV (148 aa)) constitute an MGS-like domain.

It belongs to the PurH family.

It carries out the reaction (6R)-10-formyltetrahydrofolate + 5-amino-1-(5-phospho-beta-D-ribosyl)imidazole-4-carboxamide = 5-formamido-1-(5-phospho-D-ribosyl)imidazole-4-carboxamide + (6S)-5,6,7,8-tetrahydrofolate. It catalyses the reaction IMP + H2O = 5-formamido-1-(5-phospho-D-ribosyl)imidazole-4-carboxamide. It functions in the pathway purine metabolism; IMP biosynthesis via de novo pathway; 5-formamido-1-(5-phospho-D-ribosyl)imidazole-4-carboxamide from 5-amino-1-(5-phospho-D-ribosyl)imidazole-4-carboxamide (10-formyl THF route): step 1/1. Its pathway is purine metabolism; IMP biosynthesis via de novo pathway; IMP from 5-formamido-1-(5-phospho-D-ribosyl)imidazole-4-carboxamide: step 1/1. The protein is Bifunctional purine biosynthesis protein PurH of Aeromonas hydrophila subsp. hydrophila (strain ATCC 7966 / DSM 30187 / BCRC 13018 / CCUG 14551 / JCM 1027 / KCTC 2358 / NCIMB 9240 / NCTC 8049).